The following is a 587-amino-acid chain: Pyruvate kinase (587 aa).

R33 lines the substrate pocket. Residues N35, S37, D67, and T68 each contribute to the K(+) site. N35 to H38 serves as a coordination point for ATP. R74 and K157 together coordinate ATP. Residue K221 participates in substrate binding. A Mg(2+)-binding site is contributed by E223. Residues G246, D247, and T279 each coordinate substrate. A Mg(2+)-binding site is contributed by D247.

Belongs to the pyruvate kinase family. It in the C-terminal section; belongs to the PEP-utilizing enzyme family. In terms of assembly, homotetramer. Requires Mg(2+) as cofactor. K(+) is required as a cofactor. In terms of processing, the N-terminus is blocked.

It catalyses the reaction pyruvate + ATP = phosphoenolpyruvate + ADP + H(+). It participates in carbohydrate degradation; glycolysis; pyruvate from D-glyceraldehyde 3-phosphate: step 5/5. Its activity is regulated as follows. Exhibits homotropic positive cooperativity for PEP. Allosterically activated by ribose-5-phosphate, AMP and other nucleoside monophosphates but not by fructose-1,6-bisphosphate. In terms of biological role, catalyzes the phosphoryl transfer from phosphoenolpyruvate (PEP) to ADP to form pyruvate and ATP. Has a broad specificity for nucleoside diphosphates and can use ADP, GDP, IDP and UDP. The protein is Pyruvate kinase (pyk) of Geobacillus stearothermophilus (Bacillus stearothermophilus).